Here is a 918-residue protein sequence, read N- to C-terminus: Chitin synthase C (918 aa).

The interval 1–63 (MSYNRLGDPY…EMPSSDRLAE (63 aa)) is disordered. Residues 22 to 37 (NPSSLSNRSPSPGRPL) are compositionally biased toward low complexity. The next 4 membrane-spanning stretches (helical) occupy residues 562–581 (WLNG…YQLW), 605–625 (LFAW…TTYL), 637–657 (VLGV…FVLS), and 672–692 (MVYL…FVTV). The N-linked (GlcNAc...) asparagine glycan is linked to N712. 3 helical membrane-spanning segments follow: residues 715-735 (FFSI…ASII), 845-865 (VVLV…SSAG), and 890-910 (VVLW…MWFL).

This sequence belongs to the chitin synthase family. Class I subfamily. As to expression, mainly expressed in hyphae and conidiphores. Relatively strongly expressed in young cleistothecia and in mature ascospores, but negligible in Huelle cells.

Its subcellular location is the cell membrane. It is found in the cell septum. It localises to the cell tip. The enzyme catalyses [(1-&gt;4)-N-acetyl-beta-D-glucosaminyl](n) + UDP-N-acetyl-alpha-D-glucosamine = [(1-&gt;4)-N-acetyl-beta-D-glucosaminyl](n+1) + UDP + H(+). Its function is as follows. Polymerizes chitin, a structural polymer of the cell wall and septum, by transferring the sugar moiety of UDP-GlcNAc to the non-reducing end of the growing chitin polymer. ChsC and chsA share critical functions in hyphal wall integrity and differentiation. ChsA and chsC share also overlapping roles in septum formation. The polypeptide is Chitin synthase C (Emericella nidulans (strain FGSC A4 / ATCC 38163 / CBS 112.46 / NRRL 194 / M139) (Aspergillus nidulans)).